A 567-amino-acid polypeptide reads, in one-letter code: Potassium-transporting ATPase potassium-binding subunit (567 aa).

12 consecutive transmembrane segments (helical) span residues 5–25, 64–84, 136–156, 179–199, 254–274, 285–305, 328–350, 375–395, 421–441, 459–481, 486–506, and 529–549; these read GWLQILIYIGILLLLVKPLGG, TTYSISMLLFSLAGFLMLYFL, GFTVQNFVSAATGIALAIALI, LYVLLPACIVMTLVFVYLGVP, ISNLIQMLAIFAIGAALTNVF, WAILAAMGTLFIAGVIVTYWA, VRFGITMSSLFAVITTAASCGAV, IVGGVGAGFYGILMFVIIAIF, MLAVLCLPAGMLIFTAISVVL, ILYAYSSAAANNGSAFAGLSANT, ITLGVVMLIGRFLVIVPALAI, and LFVGLLVGTILIVGGLTFFPA.

The protein belongs to the KdpA family. The system is composed of three essential subunits: KdpA, KdpB and KdpC.

It localises to the cell inner membrane. In terms of biological role, part of the high-affinity ATP-driven potassium transport (or Kdp) system, which catalyzes the hydrolysis of ATP coupled with the electrogenic transport of potassium into the cytoplasm. This subunit binds the periplasmic potassium ions and delivers the ions to the membrane domain of KdpB through an intramembrane tunnel. This is Potassium-transporting ATPase potassium-binding subunit from Rhizobium rhizogenes (strain K84 / ATCC BAA-868) (Agrobacterium radiobacter).